Reading from the N-terminus, the 431-residue chain is Adenylosuccinate synthetase (431 aa).

GTP is bound by residues 12-18 (GDEGKGK) and 40-42 (GHT). Asp-13 functions as the Proton acceptor in the catalytic mechanism. Mg(2+) is bound by residues Asp-13 and Gly-40. IMP contacts are provided by residues 13–16 (DEGK), 38–41 (NAGH), Thr-130, Arg-144, Gln-225, Thr-240, and Arg-304. The active-site Proton donor is the His-41. 300–306 (ATTGRPR) is a binding site for substrate. Residues Arg-306, 332-334 (KLD), and 414-416 (SVG) contribute to the GTP site.

Belongs to the adenylosuccinate synthetase family. In terms of assembly, homodimer. It depends on Mg(2+) as a cofactor.

The protein resides in the cytoplasm. The enzyme catalyses IMP + L-aspartate + GTP = N(6)-(1,2-dicarboxyethyl)-AMP + GDP + phosphate + 2 H(+). The protein operates within purine metabolism; AMP biosynthesis via de novo pathway; AMP from IMP: step 1/2. Functionally, plays an important role in the de novo pathway of purine nucleotide biosynthesis. Catalyzes the first committed step in the biosynthesis of AMP from IMP. The sequence is that of Adenylosuccinate synthetase from Anaeromyxobacter sp. (strain Fw109-5).